The chain runs to 100 residues: Urease subunit gamma (100 aa).

Belongs to the urease gamma subunit family. Heterotrimer of UreA (gamma), UreB (beta) and UreC (alpha) subunits. Three heterotrimers associate to form the active enzyme.

Its subcellular location is the cytoplasm. It catalyses the reaction urea + 2 H2O + H(+) = hydrogencarbonate + 2 NH4(+). It functions in the pathway nitrogen metabolism; urea degradation; CO(2) and NH(3) from urea (urease route): step 1/1. The chain is Urease subunit gamma from Chelativorans sp. (strain BNC1).